The following is a 724-amino-acid chain: Putative methyltransferase NSUN7 (724 aa).

Residue C444 is the Nucleophile of the active site. 3 disordered regions span residues 542 to 574, 595 to 629, and 698 to 724; these read KTLK…LAVD, ISTS…TPLV, and TSST…RPWL. Basic residues predominate over residues 543–554; it reads TLKRDKKRKKSK. A compositionally biased stretch (basic and acidic residues) spans 562-572; it reads HHGDPLRDHLA. The span at 595–618 shows a compositional bias: polar residues; that stretch reads ISTSTKMSAPAKTVSQAGTSSQVR.

This sequence belongs to the class I-like SAM-binding methyltransferase superfamily. RsmB/NOP family. As to expression, expressed in testis.

In terms of biological role, may have S-adenosyl-L-methionine-dependent methyl-transferase activity. This Mus musculus (Mouse) protein is Putative methyltransferase NSUN7 (Nsun7).